Reading from the N-terminus, the 151-residue chain is Large ribosomal subunit protein bL9 (151 aa).

The protein belongs to the bacterial ribosomal protein bL9 family.

Binds to the 23S rRNA. The sequence is that of Large ribosomal subunit protein bL9 from Chlorobium phaeovibrioides (strain DSM 265 / 1930) (Prosthecochloris vibrioformis (strain DSM 265)).